A 201-amino-acid chain; its full sequence is Small ribosomal subunit protein uS4 (201 aa).

The 65-residue stretch at 91–155 (SRLDNVVYRA…STLPFQVARE (65 aa)) folds into the S4 RNA-binding domain.

The protein belongs to the universal ribosomal protein uS4 family. Part of the 30S ribosomal subunit. Contacts protein S5. The interaction surface between S4 and S5 is involved in control of translational fidelity.

One of the primary rRNA binding proteins, it binds directly to 16S rRNA where it nucleates assembly of the body of the 30S subunit. Its function is as follows. With S5 and S12 plays an important role in translational accuracy. This is Small ribosomal subunit protein uS4 from Rhodococcus jostii (strain RHA1).